The sequence spans 360 residues: Peptide chain release factor 1 (360 aa).

Gln-235 is modified (N5-methylglutamine). The segment covering 285 to 295 has biased composition (basic and acidic residues); that stretch reads RQAAEQTDMRR. A disordered region spans residues 285 to 309; the sequence is RQAAEQTDMRRNLLGSGDRSDKIRT.

The protein belongs to the prokaryotic/mitochondrial release factor family. In terms of processing, methylated by PrmC. Methylation increases the termination efficiency of RF1.

It is found in the cytoplasm. In terms of biological role, peptide chain release factor 1 directs the termination of translation in response to the peptide chain termination codons UAG and UAA. The chain is Peptide chain release factor 1 from Haemophilus influenzae (strain 86-028NP).